We begin with the raw amino-acid sequence, 136 residues long: MIPGEIITKSTEVEINNHHPETVIEVENTGDRPIQVGSHFHFYEANAALDFEREMAYGKHLDIPAGAAVRFEPGDKKEVQLVEYAGKRKIFGFRGMVNGPIDESRVYRPTDENDEYAGVFGDNGAENVNKKGRKRS.

A disordered region spans residues 113-136 (NDEYAGVFGDNGAENVNKKGRKRS).

It belongs to the urease beta subunit family. As to quaternary structure, heterotrimer of UreA (gamma), UreB (beta) and UreC (alpha) subunits. Three heterotrimers associate to form the active enzyme.

It localises to the cytoplasm. It carries out the reaction urea + 2 H2O + H(+) = hydrogencarbonate + 2 NH4(+). It participates in nitrogen metabolism; urea degradation; CO(2) and NH(3) from urea (urease route): step 1/1. The sequence is that of Urease subunit beta from Staphylococcus aureus (strain Newman).